The primary structure comprises 356 residues: sn-glycerol-3-phosphate import ATP-binding protein UgpC (356 aa).

The ABC transporter domain occupies 4–235 (LKLQAVTKSW…PASLFVASFI (232 aa)). 37 to 44 (GPSGCGKS) contributes to the ATP binding site.

It belongs to the ABC transporter superfamily. sn-glycerol-3-phosphate importer (TC 3.A.1.1.3) family. In terms of assembly, the complex is composed of two ATP-binding proteins (UgpC), two transmembrane proteins (UgpA and UgpE) and a solute-binding protein (UgpB).

It localises to the cell inner membrane. It carries out the reaction sn-glycerol 3-phosphate(out) + ATP + H2O = sn-glycerol 3-phosphate(in) + ADP + phosphate + H(+). In terms of biological role, part of the ABC transporter complex UgpBAEC involved in sn-glycerol-3-phosphate (G3P) import. Responsible for energy coupling to the transport system. The sequence is that of sn-glycerol-3-phosphate import ATP-binding protein UgpC from Shigella sonnei (strain Ss046).